We begin with the raw amino-acid sequence, 203 residues long: Pyridoxal 5'-phosphate synthase subunit PdxT (203 aa).

51 to 53 (GES) is an L-glutamine binding site. Residue cysteine 83 is the Nucleophile of the active site. Residues arginine 110 and 137–138 (IR) contribute to the L-glutamine site. Residues histidine 172 and glutamate 174 each act as charge relay system in the active site.

The protein belongs to the glutaminase PdxT/SNO family. As to quaternary structure, in the presence of PdxS, forms a dodecamer of heterodimers. Only shows activity in the heterodimer.

The catalysed reaction is aldehydo-D-ribose 5-phosphate + D-glyceraldehyde 3-phosphate + L-glutamine = pyridoxal 5'-phosphate + L-glutamate + phosphate + 3 H2O + H(+). It catalyses the reaction L-glutamine + H2O = L-glutamate + NH4(+). The protein operates within cofactor biosynthesis; pyridoxal 5'-phosphate biosynthesis. In terms of biological role, catalyzes the hydrolysis of glutamine to glutamate and ammonia as part of the biosynthesis of pyridoxal 5'-phosphate. The resulting ammonia molecule is channeled to the active site of PdxS. In Thermoplasma acidophilum (strain ATCC 25905 / DSM 1728 / JCM 9062 / NBRC 15155 / AMRC-C165), this protein is Pyridoxal 5'-phosphate synthase subunit PdxT.